Here is a 93-residue protein sequence, read N- to C-terminus: Acylphosphatase (93 aa).

The Acylphosphatase-like domain maps to 5–93 (CIIAWVHGRV…EELTGFRIRY (89 aa)). Residues Arg20 and Asn38 contribute to the active site.

It belongs to the acylphosphatase family.

It carries out the reaction an acyl phosphate + H2O = a carboxylate + phosphate + H(+). The protein is Acylphosphatase (acyP) of Citrobacter koseri (strain ATCC BAA-895 / CDC 4225-83 / SGSC4696).